We begin with the raw amino-acid sequence, 546 residues long: Probable protein kinase UbiB (546 aa).

The Protein kinase domain maps to 124–502 (DFEIKPLASA…HVRQGQSRYF (379 aa)). ATP contacts are provided by residues 130–138 (LASASIAQV) and Lys153. The Proton acceptor role is filled by Asp288. Helical transmembrane passes span 501–521 (YFLG…VSRP) and 522–542 (EWGL…FVGW).

This sequence belongs to the ABC1 family. UbiB subfamily.

It localises to the cell inner membrane. Its pathway is cofactor biosynthesis; ubiquinone biosynthesis [regulation]. In terms of biological role, is probably a protein kinase regulator of UbiI activity which is involved in aerobic coenzyme Q (ubiquinone) biosynthesis. The polypeptide is Probable protein kinase UbiB (Shigella sonnei (strain Ss046)).